Reading from the N-terminus, the 597-residue chain is uncharacterized protein (597 aa).

The 198-residue stretch at 378–575 (EVSFVVDNSG…YLPRELLRTL (198 aa)) folds into the VWFA domain.

This is an uncharacterized protein from Treponema pallidum (strain Nichols).